The sequence spans 359 residues: 3-isopropylmalate dehydrogenase (359 aa).

An NAD(+)-binding site is contributed by 74-85 (GPKWGTGSVRPE). The substrate site is built by Arg-92, Arg-102, Arg-131, and Asp-220. Mg(2+)-binding residues include Asp-220, Asp-245, and Asp-249. Residue 284 to 295 (GSAPDLPANKVN) coordinates NAD(+).

The protein belongs to the isocitrate and isopropylmalate dehydrogenases family. Homodimer. Requires Mg(2+) as cofactor. It depends on Mn(2+) as a cofactor.

It is found in the cytoplasm. The catalysed reaction is (2R,3S)-3-isopropylmalate + NAD(+) = 4-methyl-2-oxopentanoate + CO2 + NADH. The protein operates within amino-acid biosynthesis; L-leucine biosynthesis; L-leucine from 3-methyl-2-oxobutanoate: step 3/4. Functionally, catalyzes the oxidation of 3-carboxy-2-hydroxy-4-methylpentanoate (3-isopropylmalate) to 3-carboxy-4-methyl-2-oxopentanoate. The product decarboxylates to 4-methyl-2 oxopentanoate. The chain is 3-isopropylmalate dehydrogenase (LEU2) from Kluyveromyces marxianus (Yeast).